The sequence spans 131 residues: Large ribosomal subunit protein bL19 (131 aa).

It belongs to the bacterial ribosomal protein bL19 family.

Functionally, this protein is located at the 30S-50S ribosomal subunit interface and may play a role in the structure and function of the aminoacyl-tRNA binding site. The chain is Large ribosomal subunit protein bL19 from Anaeromyxobacter dehalogenans (strain 2CP-C).